An 823-amino-acid chain; its full sequence is DNA mismatch repair protein MutS (823 aa).

605-612 contacts ATP; that stretch reads GPNMSGKS.

Belongs to the DNA mismatch repair MutS family.

In terms of biological role, this protein is involved in the repair of mismatches in DNA. It is possible that it carries out the mismatch recognition step. This protein has a weak ATPase activity. In Fervidobacterium nodosum (strain ATCC 35602 / DSM 5306 / Rt17-B1), this protein is DNA mismatch repair protein MutS.